A 300-amino-acid polypeptide reads, in one-letter code: Probable alpha-L-glutamate ligase (300 aa).

Residues 104-287 (LQLLARQGID…IAGRMIEYIE (184 aa)) enclose the ATP-grasp domain. Residues Lys141, 178–179 (EY), Asp187, and 211–213 (RSN) contribute to the ATP site. Mg(2+) is bound by residues Asp248, Glu260, and Asn262. Mn(2+) is bound by residues Asp248, Glu260, and Asn262.

Belongs to the RimK family. Mg(2+) serves as cofactor. The cofactor is Mn(2+).

The sequence is that of Probable alpha-L-glutamate ligase from Serratia proteamaculans (strain 568).